The chain runs to 86 residues: Selenoprotein W (86 aa).

Positions 10–13 (CGGU) form a cross-link, cysteinyl-selenocysteine (Cys-Sec); redox-active. Position 13 (Sec-13) is a non-standard amino acid, selenocysteine.

The protein belongs to the SelWTH family. Selenoprotein W subfamily.

It is found in the cytoplasm. In terms of biological role, plays a role as a glutathione (GSH)-dependent antioxidant. May be involved in a redox-related process. May play a role in the myopathies of selenium deficiency. The protein is Selenoprotein W of Danio rerio (Zebrafish).